Here is a 210-residue protein sequence, read N- to C-terminus: Redox-sensing transcriptional repressor Rex (210 aa).

The segment at residues 17–56 is a DNA-binding region (H-T-H motif); the sequence is KYHRYLYELLKNDVDRISSKELSEKIGFTASQIRQDLNCF. 91–96 contributes to the NAD(+) binding site; the sequence is GAGNIG.

It belongs to the transcriptional regulatory Rex family. As to quaternary structure, homodimer.

It localises to the cytoplasm. Functionally, modulates transcription in response to changes in cellular NADH/NAD(+) redox state. The polypeptide is Redox-sensing transcriptional repressor Rex (Clostridium botulinum (strain Loch Maree / Type A3)).